Reading from the N-terminus, the 301-residue chain is MAFHKLVKNSAYYSRFQTKYKRRREGKTDYYARKRLITQAKNKYNAPKYRLVVRFTNRDIILQIVSSEITGDKVFASAYSHELKAYGIEHGLTNWAAAYATGLLLARRVLKKLGLDETFKGVEEADGEYKLTEAAETDDGERRPFKAFLDVGLARTSTGARVFGAMKGASDGGIFIPHSENRFPGYDMESEELDAETLKKYIFGGHVAEYMETLADDDEERYKSQFNRYIEDDLEADGLEDLYAEAHAAIREDPFKKAESEAPKKTKEEWKAESLKYKKSKLTREQRAAGVQERIAALRSE.

This sequence belongs to the universal ribosomal protein uL18 family. Component of the large ribosomal subunit (LSU). Mature N.crassa ribosomes consist of a small (40S) and a large (60S) subunit. The 40S small subunit contains 1 molecule of ribosomal RNA (18S rRNA) and at least 32 different proteins. The large 60S subunit contains 3 rRNA molecules (26S, 5.8S and 5S rRNA) and at least 42 different proteins.

It is found in the cytoplasm. In terms of biological role, component of the ribosome, a large ribonucleoprotein complex responsible for the synthesis of proteins in the cell. The small ribosomal subunit (SSU) binds messenger RNAs (mRNAs) and translates the encoded message by selecting cognate aminoacyl-transfer RNA (tRNA) molecules. The large subunit (LSU) contains the ribosomal catalytic site termed the peptidyl transferase center (PTC), which catalyzes the formation of peptide bonds, thereby polymerizing the amino acids delivered by tRNAs into a polypeptide chain. The nascent polypeptides leave the ribosome through a tunnel in the LSU and interact with protein factors that function in enzymatic processing, targeting, and the membrane insertion of nascent chains at the exit of the ribosomal tunnel. This Neurospora crassa (strain ATCC 24698 / 74-OR23-1A / CBS 708.71 / DSM 1257 / FGSC 987) protein is Large ribosomal subunit protein uL18 (rpl-5).